The sequence spans 289 residues: ADP-polyphosphate phosphotransferase (289 aa).

Belongs to the polyphosphate kinase 2 (PPK2) family. Class I subfamily.

It carries out the reaction [phosphate](n) + ATP = [phosphate](n+1) + ADP. Uses inorganic polyphosphate (polyP) as a donor to convert ADP to ATP. The polypeptide is ADP-polyphosphate phosphotransferase (Rhodopseudomonas palustris (strain ATCC BAA-98 / CGA009)).